The following is a 121-amino-acid chain: Large ribosomal subunit protein bL20 (121 aa).

It belongs to the bacterial ribosomal protein bL20 family.

Its function is as follows. Binds directly to 23S ribosomal RNA and is necessary for the in vitro assembly process of the 50S ribosomal subunit. It is not involved in the protein synthesizing functions of that subunit. This Chlamydia pneumoniae (Chlamydophila pneumoniae) protein is Large ribosomal subunit protein bL20 (rplT).